A 336-amino-acid polypeptide reads, in one-letter code: Corrinoid adenosyltransferase PduO (336 aa).

Residues 1 to 185 (MAIYTRTGDA…IIREVSKRYL (185 aa)) are pduON. A pduOC region spans residues 194 to 336 (KETTPVALSF…IAAINVGTHQ (143 aa)). Residue H207 coordinates heme. E215 and Q218 together coordinate Mg(2+).

Belongs to the Cob(I)alamin adenosyltransferase family. PduO subfamily. The C-terminal domain (PduOC) forms stable octamers and also crystallizes as an octamer. Forms a complex with PduS. Heme b is required as a cofactor. Requires Mg(2+) as cofactor.

It localises to the bacterial microcompartment. The enzyme catalyses cob(I)alamin-[corrinoid adenosyltransferase] + ATP = apo-[corrinoid adenosyltransferase] + adenosylcob(III)alamin + triphosphate. It participates in polyol metabolism; 1,2-propanediol degradation. The protein operates within cofactor biosynthesis; adenosylcobalamin biosynthesis. With respect to regulation, inhibited by ADP but not significantly by other nucleotides, inhibited by diphosphate and less well by triphosphate. Its function is as follows. Converts cob(I)alamin to adenosylcobalamin (adenosylcob(III)alamin), the cofactor for propanediol dehydratase. Found in the bacterial microcompartment (BMC) dedicated to 1,2-propanediol (1,2-PD) degradation. For adenosylcobalamin synthesis dATP can replace ATP, but no other nucleotides will substitute. PduS and PduO allow regeneration of the adenosylcobalamin cofactor within the BMC. The 1,2-PD-specific bacterial microcompartment (BMC) concentrates low levels of 1,2-PD catabolic enzymes, concentrates volatile reaction intermediates thus enhancing pathway flux and keeps the level of toxic, mutagenic propionaldehyde low. The protein is Corrinoid adenosyltransferase PduO of Salmonella typhimurium (strain LT2 / SGSC1412 / ATCC 700720).